Consider the following 397-residue polypeptide: Elongation factor Tu (397 aa).

One can recognise a tr-type G domain in the interval 10 to 206; sequence KPHVNIGTIG…AVDDNVPEPE (197 aa). The interval 19 to 26 is G1; sequence GHVDHGKT. 19–26 contributes to the GTP binding site; that stretch reads GHVDHGKT. Threonine 26 is a binding site for Mg(2+). Positions 62-66 are G2; that stretch reads GITIN. The interval 83-86 is G3; it reads DAPG. GTP is bound by residues 83–87 and 138–141; these read DAPGH and NKSD. Residues 138–141 are G4; the sequence is NKSD. Positions 176–178 are G5; the sequence is SAL.

The protein belongs to the TRAFAC class translation factor GTPase superfamily. Classic translation factor GTPase family. EF-Tu/EF-1A subfamily. As to quaternary structure, monomer.

Its subcellular location is the cytoplasm. The enzyme catalyses GTP + H2O = GDP + phosphate + H(+). Its function is as follows. GTP hydrolase that promotes the GTP-dependent binding of aminoacyl-tRNA to the A-site of ribosomes during protein biosynthesis. The polypeptide is Elongation factor Tu (Brevibacterium linens).